The sequence spans 446 residues: MKPVLALVGRPNVGKSTLFNRLTKSRDAIVADFAGLTRDRHYGDGRLGEREFIVVDTGGFEPTAESGIYKEMAKQTRQAVAESDVVIFVVDVRAGVTGQDHDIARYLRTAGKKVLLAANKAEGMLEGIQLAEFYELGMGEPLAVSSAHGQGIRSLLTAALEDFAFDEPDDLALDDPERPIRLAVAGRPNVGKSTLINTWLGEERLVAFDLPGTTRDAISVPFERNGQKFELIDTAGLRRKGKVFESIEKFSVVKTLQAIADANVVLLLLDATQGVTDQDAHIAGYILDSGRAVVLAVNKWDAVDSYQRELLQRSIEQRLAFLKFAPVLHISAIKRQGLGPVWKAIADAWASATKKLATPVLTRVLLEAVQFQQPKRAGAFRPKLRYAHQGGQNPPVIVIHGNSLEHVTDAYKRFLEGRFRCHFQLSGTPMRIEMKSSRNPFAEKDS.

EngA-type G domains are found at residues 3–167 (PVLA…AFDE) and 180–353 (IRLA…ASAT). GTP-binding positions include 9–16 (GRPNVGKS), 56–60 (DTGGF), 119–122 (NKAE), 186–193 (GRPNVGKS), 233–237 (DTAGL), and 298–301 (NKWD). The KH-like domain occupies 354-438 (KKLATPVLTR…PMRIEMKSSR (85 aa)).

It belongs to the TRAFAC class TrmE-Era-EngA-EngB-Septin-like GTPase superfamily. EngA (Der) GTPase family. Associates with the 50S ribosomal subunit.

In terms of biological role, GTPase that plays an essential role in the late steps of ribosome biogenesis. The sequence is that of GTPase Der from Methylibium petroleiphilum (strain ATCC BAA-1232 / LMG 22953 / PM1).